The primary structure comprises 235 residues: MTDGNQKPDGNSGEQVTVTDKRRIDPETGEVRHVPPGDMPGGTAAADAAHTEDKVAELTADLQRVQADFANYRKRALRDQQAAADRAKASVVSQLLGVLDDLERARKHGDLESGPLKSVADKLDSALTGLGLVAFGAEGEDFDPVLHEAVQHEGDGGQGSKPVIGTVMRQGYQLGEQVLRHALVGVVDTVVVDAAELESVDDGTAVADTAENDQADQGNSADTLGEQAESEPSGS.

Residues 1–18 (MTDGNQKPDGNSGEQVTV) show a composition bias toward polar residues. 2 disordered regions span residues 1–50 (MTDG…DAAH) and 198–235 (ESVD…PSGS). A compositionally biased stretch (basic and acidic residues) spans 19–35 (TDKRRIDPETGEVRHVP).

This sequence belongs to the GrpE family. In terms of assembly, homodimer.

Its subcellular location is the cytoplasm. Participates actively in the response to hyperosmotic and heat shock by preventing the aggregation of stress-denatured proteins, in association with DnaK and GrpE. It is the nucleotide exchange factor for DnaK and may function as a thermosensor. Unfolded proteins bind initially to DnaJ; upon interaction with the DnaJ-bound protein, DnaK hydrolyzes its bound ATP, resulting in the formation of a stable complex. GrpE releases ADP from DnaK; ATP binding to DnaK triggers the release of the substrate protein, thus completing the reaction cycle. Several rounds of ATP-dependent interactions between DnaJ, DnaK and GrpE are required for fully efficient folding. The polypeptide is Protein GrpE (Mycobacterium bovis (strain BCG / Pasteur 1173P2)).